The primary structure comprises 108 residues: uncharacterized protein (108 aa).

The segment covering 48–73 has biased composition (low complexity); sequence NSNIPSSSSSSPSFASFFSSTSTSAT. The segment at 48-81 is disordered; that stretch reads NSNIPSSSSSSPSFASFFSSTSTSATLNGSSNNK.

This is an uncharacterized protein from Dictyostelium discoideum (Social amoeba).